The primary structure comprises 279 residues: Small ribosomal subunit protein uS9m (279 aa).

It belongs to the universal ribosomal protein uS9 family.

The protein resides in the mitochondrion. This chain is Small ribosomal subunit protein uS9m (MRPS9), found in Eremothecium gossypii (strain ATCC 10895 / CBS 109.51 / FGSC 9923 / NRRL Y-1056) (Yeast).